The primary structure comprises 485 residues: Expansin-like protein 8 (485 aa).

A signal peptide spans 1–21 (MRISIILLSLLFLSLHSLIKA). Residues 22–464 (DITKLSVCGS…QSGHHASSNT (443 aa)) lie on the Extracellular side of the membrane. The 114-residue stretch at 26–139 (LSVCGSARAV…QIVSCGYSGN (114 aa)) folds into the Expansin-like EG45 domain. 2 cysteine pairs are disulfide-bonded: Cys29/Cys70 and Cys73/Cys134. N-linked (GlcNAc...) asparagine glycosylation is found at Asn117 and Asn365. Residues 408-436 (EVNNKPSTTSGTGTTSSKPSSSSGGVSGG) are disordered. The span at 414–431 (STTSGTGTTSSKPSSSSG) shows a compositional bias: low complexity. N-linked (GlcNAc...) asparagine glycosylation is present at Asn454. Residues 465–485 (NILLPTTFVFFISITILSLLF) traverse the membrane as a helical segment.

Belongs to the expansin family. Expansin A subfamily.

The protein resides in the membrane. May serve to lubricate the movement of the cellulose microfibrils during cell growth and wall extension and/or may serve to maintain the fluid state of the slug cell wall. This chain is Expansin-like protein 8 (expl8), found in Dictyostelium discoideum (Social amoeba).